A 251-amino-acid chain; its full sequence is uncharacterized protein (251 aa).

12 to 36 (VVTGASSGIGEATARTLAAQGFHVV) contacts NADP(+). Ser136 provides a ligand contact to substrate. Tyr149 acts as the Proton acceptor in catalysis.

It belongs to the short-chain dehydrogenases/reductases (SDR) family.

This is an uncharacterized protein from Mycobacterium tuberculosis (strain CDC 1551 / Oshkosh).